The following is an 825-amino-acid chain: Trimethylamine-N-oxide reductase (825 aa).

Positions 1–40 (MKKNNVNEQRRDFLKKTSLGVAGSALSGGMVGVVSKSAVA) form a signal peptide, tat-type signal. S187 lines the Mo-bis(molybdopterin guanine dinucleotide) pocket.

Belongs to the prokaryotic molybdopterin-containing oxidoreductase family. The cofactor is Mo-bis(molybdopterin guanine dinucleotide). In terms of processing, predicted to be exported by the Tat system. The position of the signal peptide cleavage has not been experimentally proven.

Its subcellular location is the periplasm. It carries out the reaction trimethylamine + 2 Fe(III)-[cytochrome c] + H2O = trimethylamine N-oxide + 2 Fe(II)-[cytochrome c] + 3 H(+). Functionally, reduces trimethylamine-N-oxide (TMAO) into trimethylamine; an anaerobic reaction coupled to energy-yielding reactions. The chain is Trimethylamine-N-oxide reductase (torZ) from Haemophilus influenzae (strain ATCC 51907 / DSM 11121 / KW20 / Rd).